A 212-amino-acid polypeptide reads, in one-letter code: Fibroblast growth factor 8b (212 aa).

The first 27 residues, 1 to 27 (MRLKSSRLGYLFLQFMTLCFYTQMTMQ), serve as a signal peptide directing secretion. An N-linked (GlcNAc...) asparagine glycan is attached at Asn-139.

Belongs to the heparin-binding growth factors family.

The protein resides in the secreted. In terms of biological role, may act as signaling molecule during development of the midbrain-hindbrain boundary (MHB) organizer, and be involved in patterning of the nervous system. This is Fibroblast growth factor 8b (fgf8b) from Danio rerio (Zebrafish).